We begin with the raw amino-acid sequence, 343 residues long: Nuclear hormone receptor family member nhr-167 (343 aa).

Positions 5–81 (HQKCAVCGRF…VGMTLPSYLL (77 aa)) form a DNA-binding region, nuclear receptor. NR C4-type zinc fingers lie at residues 8-28 (CAVCGRFTTEFNYSVLSCNSC) and 45-64 (CFRGERCFEKTPYIFKCTSC). One can recognise an NR LBD domain in the interval 101–339 (THNKRMDSLF…KKLVKDGIEA (239 aa)).

The protein belongs to the nuclear hormone receptor family.

The protein resides in the nucleus. Its function is as follows. Orphan nuclear receptor. In Caenorhabditis elegans, this protein is Nuclear hormone receptor family member nhr-167 (nhr-167).